Here is a 224-residue protein sequence, read N- to C-terminus: Cutinase 1 (224 aa).

Residues 1 to 16 (MKFLSVLSLAITLAAA) form the signal peptide. A disulfide bond links C46 and C125. The active-site Nucleophile is the S136. Cysteines 187 and 194 form a disulfide. The active site involves D191. H204 functions as the Proton donor/acceptor in the catalytic mechanism.

The protein belongs to the cutinase family. In terms of processing, the 2 disulfide bonds play a critical role in holding the catalytic residues in juxta-position; reduction of the disulfide bridges results in the complete inactivation of the enzyme. The N-terminus is blocked.

It is found in the secreted. The catalysed reaction is cutin + H2O = cutin monomers.. Its activity is regulated as follows. Inhibited by diisopropyl fluorophosphate (DFP). Functionally, catalyzes the hydrolysis of complex carboxylic polyesters found in the cell wall of plants. Degrades cutin, a macromolecule that forms the structure of the plant cuticle. Allows pathogenic fungi to penetrate through the cuticular barrier into the host plant during the initial stage of fungal infection. This is Cutinase 1 (CUTA) from Colletotrichum gloeosporioides (Anthracnose fungus).